The following is an 847-amino-acid chain: Alanine--tRNA ligase (847 aa).

His554, His558, Cys656, and His660 together coordinate Zn(2+).

The protein belongs to the class-II aminoacyl-tRNA synthetase family. Requires Zn(2+) as cofactor.

It localises to the cytoplasm. The catalysed reaction is tRNA(Ala) + L-alanine + ATP = L-alanyl-tRNA(Ala) + AMP + diphosphate. Its function is as follows. Catalyzes the attachment of alanine to tRNA(Ala) in a two-step reaction: alanine is first activated by ATP to form Ala-AMP and then transferred to the acceptor end of tRNA(Ala). Also edits incorrectly charged Ser-tRNA(Ala) and Gly-tRNA(Ala) via its editing domain. The sequence is that of Alanine--tRNA ligase from Helicobacter acinonychis (strain Sheeba).